The sequence spans 310 residues: Thioredoxin reductase (310 aa).

34 to 41 (NGMQPGGQ) provides a ligand contact to FAD. A disulfide bridge connects residues Cys135 and Cys138. Residue 281-290 (DVQDKIYRQA) coordinates FAD.

This sequence belongs to the class-II pyridine nucleotide-disulfide oxidoreductase family. As to quaternary structure, homodimer. FAD serves as cofactor.

It is found in the cytoplasm. The enzyme catalyses [thioredoxin]-dithiol + NADP(+) = [thioredoxin]-disulfide + NADPH + H(+). This Rickettsia felis (strain ATCC VR-1525 / URRWXCal2) (Rickettsia azadi) protein is Thioredoxin reductase (trxB).